Reading from the N-terminus, the 412-residue chain is Docking protein 2 (412 aa).

Residues 4 to 114 enclose the PH domain; the sequence is GAVKQGFLYL…WVQAICLLAF (111 aa). The IRS-type PTB domain maps to 147 to 252; sequence PHKEFAVTMR…SAQKNAAPAT (106 aa). The disordered stretch occupies residues 246–296; it reads KNAAPATPQPQPATIPASLPRPDSPYSRPHDSLPPPSPTTPVPAPRPRGQE. Position 271 is a phosphotyrosine (Tyr-271). The segment covering 277-291 has biased composition (pro residues); that stretch reads SLPPPSPTTPVPAPR. Residues Tyr-299 and Tyr-345 each carry the phosphotyrosine modification. The disordered stretch occupies residues 359–412; it reads SPQEPRGEAWRRQATADRDPAGLQHVQPAGQDFSASGWQPGTEYDNVVLKKGPK. The segment covering 361-378 has biased composition (basic and acidic residues); it reads QEPRGEAWRRQATADRDP.

It belongs to the DOK family. Type A subfamily. In terms of assembly, interacts with phosphorylated RASGAP and EGFR. Interacts with RET and NCK. Interacts (via PH domain) with TEK/TIE2 (tyrosine phosphorylated). As to quaternary structure, (Microbial infection) Interacts with Herpes simplex virus 1 (HHV-1) protein UL46; this interaction induces DOK2 phosphorylation and subsequent degradation. Post-translationally, on immunoreceptor stimulation, phosphorylated on C-terminal tyrosine residues. Phosphorylation on Tyr-345 is required for binding to the SH2 domain of NCK. Phosphorylation on both Tyr-271 and Tyr-299 is required for interaction with RASGAP. Phosphorylated on tyrosine residues by TEK/TIE2. Highly expressed in peripheral blood leukocytes, lymph nodes and spleen. Lower expression in thymus, bone marrow and fetal liver.

Functionally, DOK proteins are enzymatically inert adaptor or scaffolding proteins. They provide a docking platform for the assembly of multimolecular signaling complexes. DOK2 may modulate the cellular proliferation induced by IL-4, as well as IL-2 and IL-3. May be involved in modulating Bcr-Abl signaling. Attenuates EGF-stimulated MAP kinase activation. This Homo sapiens (Human) protein is Docking protein 2 (DOK2).